Consider the following 242-residue polypeptide: tRNA (guanine-N(1)-)-methyltransferase (242 aa).

Residues Gly113 and 133 to 138 (IGDYVL) each bind S-adenosyl-L-methionine.

It belongs to the RNA methyltransferase TrmD family. As to quaternary structure, homodimer.

The protein resides in the cytoplasm. It carries out the reaction guanosine(37) in tRNA + S-adenosyl-L-methionine = N(1)-methylguanosine(37) in tRNA + S-adenosyl-L-homocysteine + H(+). Specifically methylates guanosine-37 in various tRNAs. This chain is tRNA (guanine-N(1)-)-methyltransferase, found in Shewanella sediminis (strain HAW-EB3).